A 356-amino-acid chain; its full sequence is Phosphoribosylformylglycinamidine cyclo-ligase (356 aa).

The protein belongs to the AIR synthase family.

It is found in the cytoplasm. It catalyses the reaction 2-formamido-N(1)-(5-O-phospho-beta-D-ribosyl)acetamidine + ATP = 5-amino-1-(5-phospho-beta-D-ribosyl)imidazole + ADP + phosphate + H(+). It participates in purine metabolism; IMP biosynthesis via de novo pathway; 5-amino-1-(5-phospho-D-ribosyl)imidazole from N(2)-formyl-N(1)-(5-phospho-D-ribosyl)glycinamide: step 2/2. In Rhizobium meliloti (strain 1021) (Ensifer meliloti), this protein is Phosphoribosylformylglycinamidine cyclo-ligase.